The primary structure comprises 932 residues: Adhesion G protein-coupled receptor E2 (932 aa).

The signal sequence occupies residues Met1–Thr15. Residues His16–Ser652 lie on the Extracellular side of the membrane. 2 consecutive EGF-like domains span residues Gly32–Gln69 and Asp81–Gly119. 11 disulfide bridges follow: Cys36/Cys48, Cys42/Cys57, Cys85/Cys98, Cys92/Cys107, Cys137/Cys149, Cys143/Cys158, Cys160/Cys171, Cys177/Cys189, Cys183/Cys198, Cys226/Cys239, and Cys233/Cys248. In terms of domain architecture, EGF-like 3; calcium-binding spans Asp133 to Glu172. N-linked (GlcNAc...) asparagine glycans are attached at residues Asn148 and Asn167. An EGF-like 4; calcium-binding domain is found at Asp173–Gly210. Residues Asp222–Gln260 enclose the EGF-like 5; calcium-binding domain. Residue Asn229 is glycosylated (N-linked (GlcNAc...) asparagine). N-linked (GlcNAc...) asparagine glycosylation is found at Asn269, Asn283, Asn309, Asn333, Asn344, Asn363, Asn405, Asn417, Asn474, and Asn499. Residues Asp272 to Gln307 form the EGF-like 6; calcium-binding domain. 2 disulfide bridges follow: Cys276–Cys286 and Cys280–Cys295. The region spanning Asp319–Asp354 is the EGF-like 7; calcium-binding domain. 2 disulfides stabilise this stretch: Cys323–Cys336 and Cys330–Cys345. Positions Glu482 to Thr643 constitute a GAIN-B domain. A Cell attachment site motif is present at residues Arg507–Asp509. 2 disulfides stabilise this stretch: Cys596–Cys625 and Cys613–Cys627. Positions Cys596–Thr643 are GPS. Residues Tyr653–Phe673 traverse the membrane as a helical segment. Residues Arg674–Thr681 lie on the Cytoplasmic side of the membrane. Residues Tyr682–Ile702 traverse the membrane as a helical segment. At Asp703–His719 the chain is on the extracellular side. Asn707 carries an N-linked (GlcNAc...) asparagine glycan. The helical transmembrane segment at Tyr720–Val740 threads the bilayer. At Arg741–Met756 the chain is on the cytoplasmic side. The helical transmembrane segment at Leu757–Val777 threads the bilayer. Residues His778–Gly795 lie on the Extracellular side of the membrane. Residues Phe796–Ala816 traverse the membrane as a helical segment. The Cytoplasmic segment spans residues Trp817–Gln849. A helical transmembrane segment spans residues Ile850–Ile870. The Extracellular segment spans residues Met871–Ala872. The helical transmembrane segment at Tyr873–Leu893 threads the bilayer. At Asn894–Gly932 the chain is on the cytoplasmic side.

This sequence belongs to the G-protein coupled receptor 2 family. Adhesion G-protein coupled receptor (ADGR) subfamily.

It localises to the cell membrane. Orphan receptor involved in cell adhesion and probably in cell-cell interactions involved specifically cells of the immune system. May play a role in regulatory T-cells (Treg) development. The chain is Adhesion G protein-coupled receptor E2 (Adgre1) from Rattus norvegicus (Rat).